Consider the following 110-residue polypeptide: MDKNEILSKLYNVIEDRKNNPIEGSYTNYLFEKGIDKILKKVGEETTEVIIASKDDNKEDLINEICDVIYHTLVLLNYKNIKLEDIEKELQKRNEKILNKKQERRPIENI.

This sequence belongs to the PRA-PH family.

The protein localises to the cytoplasm. It carries out the reaction 1-(5-phospho-beta-D-ribosyl)-ATP + H2O = 1-(5-phospho-beta-D-ribosyl)-5'-AMP + diphosphate + H(+). Its pathway is amino-acid biosynthesis; L-histidine biosynthesis; L-histidine from 5-phospho-alpha-D-ribose 1-diphosphate: step 2/9. The polypeptide is Phosphoribosyl-ATP pyrophosphatase (hisE) (Clostridium acetobutylicum (strain ATCC 824 / DSM 792 / JCM 1419 / IAM 19013 / LMG 5710 / NBRC 13948 / NRRL B-527 / VKM B-1787 / 2291 / W)).